A 151-amino-acid chain; its full sequence is MD-2-related lipid-recognition protein (151 aa).

Residues 1–18 (MAALHWLLLAALLGCTLA) form the signal peptide. 3 disulfide bridges follow: Cys27-Cys141, Cys45-Cys51, and Cys95-Cys100. A glycan (N-linked (GlcNAc...) asparagine) is linked at Asn58.

Post-translationally, N-glycosylated. As to expression, hemolymph (at protein level). Constitutively expressed mainly in fat body and also in hemocytes and secreted into hemolymph. Not detected in midgut, epidermis, or Malpighian tubule of naive larvae.

It localises to the secreted. Functionally, binds to lipopolysaccharide from a variety of Gram-negative bacteria and to lipid A. The polypeptide is MD-2-related lipid-recognition protein (Manduca sexta (Tobacco hawkmoth)).